Here is a 228-residue protein sequence, read N- to C-terminus: Cytidylate kinase (228 aa).

10–18 contributes to the ATP binding site; the sequence is GPSGSGKGT.

It belongs to the cytidylate kinase family. Type 1 subfamily.

It is found in the cytoplasm. It catalyses the reaction CMP + ATP = CDP + ADP. The catalysed reaction is dCMP + ATP = dCDP + ADP. The polypeptide is Cytidylate kinase (Acinetobacter baumannii (strain ACICU)).